The chain runs to 226 residues: Ribonuclease 3 (226 aa).

The RNase III domain maps to 7–129 (LPRLCRTLGY…IIGAVYLDAD (123 aa)). Glutamate 42 serves as a coordination point for Mg(2+). Aspartate 46 is an active-site residue. The Mg(2+) site is built by aspartate 115 and glutamate 118. The active site involves glutamate 118. Positions 156–226 (DPKTILQEYL…AAQVLELLNK (71 aa)) constitute a DRBM domain.

This sequence belongs to the ribonuclease III family. In terms of assembly, homodimer. Mg(2+) serves as cofactor.

The protein localises to the cytoplasm. It catalyses the reaction Endonucleolytic cleavage to 5'-phosphomonoester.. Functionally, digests double-stranded RNA. Involved in the processing of primary rRNA transcript to yield the immediate precursors to the large and small rRNAs (23S and 16S). Processes some mRNAs, and tRNAs when they are encoded in the rRNA operon. Processes pre-crRNA and tracrRNA of type II CRISPR loci if present in the organism. The chain is Ribonuclease 3 from Shewanella frigidimarina (strain NCIMB 400).